The chain runs to 228 residues: Probable septum site-determining protein MinC (228 aa).

This sequence belongs to the MinC family. As to quaternary structure, interacts with MinD and FtsZ.

Cell division inhibitor that blocks the formation of polar Z ring septums. Rapidly oscillates between the poles of the cell to destabilize FtsZ filaments that have formed before they mature into polar Z rings. Prevents FtsZ polymerization. This Bacillus cytotoxicus (strain DSM 22905 / CIP 110041 / 391-98 / NVH 391-98) protein is Probable septum site-determining protein MinC.